A 436-amino-acid chain; its full sequence is Probable D-serine dehydratase (436 aa).

At K111 the chain carries N6-(pyridoxal phosphate)lysine.

This sequence belongs to the serine/threonine dehydratase family. DsdA subfamily. It depends on pyridoxal 5'-phosphate as a cofactor.

It catalyses the reaction D-serine = pyruvate + NH4(+). This is Probable D-serine dehydratase from Lactiplantibacillus plantarum (strain ATCC BAA-793 / NCIMB 8826 / WCFS1) (Lactobacillus plantarum).